The sequence spans 908 residues: Low affinity vacuolar monovalent cation/H(+) antiporter (908 aa).

Residues 1–15 show a composition bias toward polar residues; it reads MAKNNHISASGNSTS. A disordered region spans residues 1–20; the sequence is MAKNNHISASGNSTSGDHRL. Residues 1–244 lie on the Cytoplasmic side of the membrane; that stretch reads MAKNNHISAS…WEVTCSNVLW (244 aa). The residue at position 26 (T26) is a Phosphothreonine. S32 bears the Phosphoserine mark. A Phosphothreonine modification is found at T33. The segment at 68–147 is disordered; the sequence is NKSKRSVSSQ…DDEDANDDSR (80 aa). A compositionally biased stretch (low complexity) spans 73-87; it reads SVSSQSPIVHSSNNT. Residues 102–121 are compositionally biased toward polar residues; that stretch reads ESLSSKSHSVPDLNTATPSS. A Phosphoserine modification is found at S110. Position 118 is a phosphothreonine (T118). At S121 the chain carries Phosphoserine. A helical transmembrane segment spans residues 245-265; it reads FILFGFPIAILFYSAAIVVFL. Topologically, residues 266–408 are vacuolar; it reads LGGGGLVTNS…GRVLFYTIFH (143 aa). A glycan (N-linked (GlcNAc...) asparagine) is linked at N361. Residues 409–429 form a helical membrane-spanning segment; sequence LVLQPILAVLSLCLWLLVFTI. The Cytoplasmic segment spans residues 430–494; that stretch reads PMSNVLWQIM…HYYKYTVDGT (65 aa). The helical transmembrane segment at 495 to 515 threads the bilayer; it reads NVIVVNLISIVFFTIFDFYVL. Residues 516-530 are Vacuolar-facing; it reads KNFLHWKTWFTYESS. A helical transmembrane segment spans residues 531–551; it reads IFILCLTSTIPLAFYIGQAVA. Residues 552–560 lie on the Cytoplasmic side of the membrane; sequence SISAQTSMG. A helical transmembrane segment spans residues 561-581; it reads VGAVINAFFSTIVEIFLYCVA. At 582–587 the chain is on the vacuolar side; that stretch reads LQQKKG. The helical transmembrane segment at 588 to 608 threads the bilayer; that stretch reads LLVEGSMIGSILGAVLLLPGL. Residues 609 to 626 lie on the Cytoplasmic side of the membrane; that stretch reads SMCGGALNRKTQRYNPAS. Residues 627-647 traverse the membrane as a helical segment; it reads AGVSSALLIFSMIVMFVPTVL. Topologically, residues 648-686 are vacuolar; the sequence is YEIYGGYSVNCADGANDRDCTFSHPPLKFNRLFTHVIQP. Residues 687–707 traverse the membrane as a helical segment; it reads MSISCAIVLFCAYIIGLWFTL. Residues 708–746 lie on the Cytoplasmic side of the membrane; sequence RTHAKMIWQLPIADPTSTAPEQQEQNSHDAPNWSRSKST. Residues 747-767 traverse the membrane as a helical segment; sequence CILLMSTLLYAIIAEILVSCV. Residues 768-783 lie on the Vacuolar side of the membrane; sequence DAVLEDIPSLNPKFLG. Residues 784–804 traverse the membrane as a helical segment; sequence LTIFALIPNTTEFLNAISFAI. At 805–816 the chain is on the cytoplasmic side; that stretch reads HGNVALSMEIGS. Residues 817 to 837 form a helical membrane-spanning segment; sequence AYALQVCLLQIPSLVIYSIFY. Over 838–851 the chain is Vacuolar; sequence TWNVKKSMINIRTQ. Residues 852–872 form a helical membrane-spanning segment; it reads MFPLVFPRWDIFGAMTSVFMF. Over 873 to 885 the chain is Cytoplasmic; the sequence is TYLYAEGKSNYFK. A helical transmembrane segment spans residues 886 to 906; it reads GSMLILLYIIIVVGFYFQGAL. The Vacuolar segment spans residues 907–908; that stretch reads SE.

It belongs to the Ca(2+):cation antiporter (CaCA) (TC 2.A.19) family.

Its subcellular location is the vacuole membrane. Has a role in promoting intracellular monovalent cation sequestration via the exchange of monovalent cations and especially Na(+) for hydrogen ions across the vacuolar membrane. In Saccharomyces cerevisiae (strain ATCC 204508 / S288c) (Baker's yeast), this protein is Low affinity vacuolar monovalent cation/H(+) antiporter (VNX1).